Consider the following 277-residue polypeptide: Caspase-3 (277 aa).

M1 is modified (N-acetylmethionine). Propeptides lie at residues 1-9 (MENNKTSVD) and 10-28 (SKSI…KSMD). Position 11 is an N6-acetyllysine (K11). S26 carries the phosphoserine modification. Residues H121 and C163 contribute to the active site. Residue C163 is modified to S-nitrosocysteine; in inhibited form.

The protein belongs to the peptidase C14A family. In terms of assembly, heterotetramer that consists of two anti-parallel arranged heterodimers, each one formed by a 17 kDa (p17) and a 12 kDa (p12) subunit. Interacts with BIRC6/bruce. As to quaternary structure, (Microbial infection) Subunit p17 interacts with African swine fever virus (ASFV) inhibitor of apoptosis protein. Cleavage by granzyme B, caspase-6, caspase-8 and caspase-10 generates the two active subunits. Additional processing of the propeptides is likely due to the autocatalytic activity of the activated protease. Active heterodimers between the small subunit of caspase-7 protease and the large subunit of caspase-3 also occur and vice versa. In terms of processing, S-nitrosylated on its catalytic site cysteine in unstimulated cell lines and denitrosylated upon activation of the Fas apoptotic pathway, associated with an increase in intracellular caspase activity. Fas therefore activates caspase-3 not only by inducing the cleavage of the caspase zymogen to its active subunits, but also by stimulating the denitrosylation of its active site thiol. Post-translationally, ubiquitinated by BIRC6; this activity is inhibited by DIABLO/SMAC.

The protein resides in the cytoplasm. The enzyme catalyses Strict requirement for an Asp residue at positions P1 and P4. It has a preferred cleavage sequence of Asp-Xaa-Xaa-Asp-|- with a hydrophobic amino-acid residue at P2 and a hydrophilic amino-acid residue at P3, although Val or Ala are also accepted at this position.. With respect to regulation, inhibited by BIRC6; following inhibition of BIRC6-caspase binding by DIABLO/SMAC, BIRC6 is subjected to caspase cleavage, leading to an increase in active caspases. In terms of biological role, involved in the activation cascade of caspases responsible for apoptosis execution. At the onset of apoptosis, it proteolytically cleaves poly(ADP-ribose) polymerase PARP1 at a '216-Asp-|-Gly-217' bond. Cleaves and activates sterol regulatory element binding proteins (SREBPs) between the basic helix-loop-helix leucine zipper domain and the membrane attachment domain. Cleaves and activates caspase-6, -7 and -9 (CASP6, CASP7 and CASP9, respectively). Cleaves and inactivates interleukin-18 (IL18). Triggers cell adhesion in sympathetic neurons through RET cleavage. Cleaves IL-1 beta between an Asp and an Ala, releasing the mature cytokine which is involved in a variety of inflammatory processes. Cleaves and inhibits serine/threonine-protein kinase AKT1 in response to oxidative stress. Acts as an inhibitor of type I interferon production during virus-induced apoptosis by mediating cleavage of antiviral proteins CGAS, IRF3 and MAVS, thereby preventing cytokine overproduction. Also involved in pyroptosis by mediating cleavage and activation of gasdermin-E (GSDME). Cleaves XRCC4 and phospholipid scramblase proteins XKR4, XKR8 and XKR9, leading to promote phosphatidylserine exposure on apoptotic cell surface. Cleaves BIRC6 following inhibition of BIRC6-caspase binding by DIABLO/SMAC. This Sus scrofa (Pig) protein is Caspase-3 (CASP3).